The chain runs to 101 residues: Small integral membrane protein 14 (101 aa).

Over residues Ser-71–Ile-81 the composition is skewed to basic and acidic residues. A disordered region spans residues Ser-71–Met-101. The segment covering Thr-92–Met-101 has biased composition (pro residues).

The chain is Small integral membrane protein 14 from Caenorhabditis elegans.